A 146-amino-acid polypeptide reads, in one-letter code: MORN repeat-containing protein 4 (146 aa).

4 MORN repeats span residues 16–38 (YRGE…DGGT), 39–61 (YLGH…DGSR), 62–84 (YEGE…DNMT), and 85–107 (FEGE…DGSH).

In terms of assembly, interacts with MYO3A.

It is found in the cytoplasm. The protein localises to the cell projection. The protein resides in the filopodium tip. It localises to the stereocilium. Functionally, plays a role in promoting axonal degeneration following neuronal injury by toxic insult or trauma. The sequence is that of MORN repeat-containing protein 4 (Morn4) from Mus musculus (Mouse).